We begin with the raw amino-acid sequence, 318 residues long: Porphobilinogen deaminase (318 aa).

S-(dipyrrolylmethanemethyl)cysteine is present on Cys-248.

Belongs to the HMBS family. Monomer. The cofactor is dipyrromethane.

The enzyme catalyses 4 porphobilinogen + H2O = hydroxymethylbilane + 4 NH4(+). Its pathway is porphyrin-containing compound metabolism; protoporphyrin-IX biosynthesis; coproporphyrinogen-III from 5-aminolevulinate: step 2/4. In terms of biological role, tetrapolymerization of the monopyrrole PBG into the hydroxymethylbilane pre-uroporphyrinogen in several discrete steps. In Caulobacter sp. (strain K31), this protein is Porphobilinogen deaminase.